A 284-amino-acid polypeptide reads, in one-letter code: D-tagatose-1,6-bisphosphate aldolase subunit GatY (284 aa).

The Proton donor role is filled by D82. H83 and H180 together coordinate Zn(2+). G181 serves as a coordination point for dihydroxyacetone phosphate. Residue H208 participates in Zn(2+) binding. Dihydroxyacetone phosphate-binding positions include 209 to 211 (GAS) and 230 to 233 (NVAT).

The protein belongs to the class II fructose-bisphosphate aldolase family. TagBP aldolase GatY subfamily. As to quaternary structure, forms a complex with GatZ. Requires Zn(2+) as cofactor.

It catalyses the reaction D-tagatofuranose 1,6-bisphosphate = D-glyceraldehyde 3-phosphate + dihydroxyacetone phosphate. The protein operates within carbohydrate metabolism; D-tagatose 6-phosphate degradation; D-glyceraldehyde 3-phosphate and glycerone phosphate from D-tagatose 6-phosphate: step 2/2. In terms of biological role, catalytic subunit of the tagatose-1,6-bisphosphate aldolase GatYZ, which catalyzes the reversible aldol condensation of dihydroxyacetone phosphate (DHAP or glycerone-phosphate) with glyceraldehyde 3-phosphate (G3P) to produce tagatose 1,6-bisphosphate (TBP). Requires GatZ subunit for full activity and stability. Is involved in the catabolism of galactitol. This chain is D-tagatose-1,6-bisphosphate aldolase subunit GatY, found in Escherichia coli (strain 55989 / EAEC).